A 55-amino-acid chain; its full sequence is MAKTTDVRPKITMACTECKERNYITKKNRRNDPDRLDLAKFCPRCGKKTTHRETR.

Belongs to the bacterial ribosomal protein bL33 family.

This Kineococcus radiotolerans (strain ATCC BAA-149 / DSM 14245 / SRS30216) protein is Large ribosomal subunit protein bL33C.